Reading from the N-terminus, the 201-residue chain is UPF0301 protein RER_60040 (201 aa).

The protein belongs to the UPF0301 (AlgH) family.

This is UPF0301 protein RER_60040 from Rhodococcus erythropolis (strain PR4 / NBRC 100887).